Reading from the N-terminus, the 481-residue chain is Squalene epoxidase erg1 (481 aa).

Residues 28 to 48 (HADVVIIGAGVLGCALAVALG) traverse the membrane as a helical segment. FAD is bound by residues 38–39 (VL), 58–59 (EA), Arg-66, and Arg-138. Asn-146 carries N-linked (GlcNAc...) asparagine glycosylation. The FAD site is built by Asp-319 and Met-332. 2 consecutive transmembrane segments (helical) span residues 425-445 (KPSV…WVLL) and 452-472 (LFPV…VVIF).

It belongs to the squalene monooxygenase family. Requires FAD as cofactor.

The protein resides in the endoplasmic reticulum membrane. It is found in the microsome membrane. The catalysed reaction is squalene + reduced [NADPH--hemoprotein reductase] + O2 = (S)-2,3-epoxysqualene + oxidized [NADPH--hemoprotein reductase] + H2O + H(+). It functions in the pathway steroid metabolism; ergosterol biosynthesis. Functionally, squalene epoxidase; part of the third module of ergosterol biosynthesis pathway that includes the late steps of the pathway. Erg1 catalyzes the epoxidation of squalene into 2,3-epoxysqualene. The third module or late pathway involves the ergosterol synthesis itself through consecutive reactions that mainly occur in the endoplasmic reticulum (ER) membrane. Firstly, the squalene synthase erg9 catalyzes the condensation of 2 farnesyl pyrophosphate moieties to form squalene, which is the precursor of all steroids. Squalene synthase is crucial for balancing the incorporation of farnesyl diphosphate (FPP) into sterol and nonsterol isoprene synthesis. Secondly, squalene is converted into lanosterol by the consecutive action of the squalene epoxidase erg1 and the lanosterol synthase erg7. Then, the delta(24)-sterol C-methyltransferase erg6 methylates lanosterol at C-24 to produce eburicol. Eburicol is the substrate of the sterol 14-alpha demethylase encoded by cyp51A and cyp51B, to yield 4,4,24-trimethyl ergosta-8,14,24(28)-trienol. The C-14 reductase erg24 then reduces the C14=C15 double bond which leads to 4,4-dimethylfecosterol. A sequence of further demethylations at C-4, involving the C-4 demethylation complex containing the C-4 methylsterol oxidases erg25A or erg25B, the sterol-4-alpha-carboxylate 3-dehydrogenase erg26 and the 3-keto-steroid reductase erg27, leads to the production of fecosterol via 4-methylfecosterol. The C-8 sterol isomerase erg2 then catalyzes the reaction which results in unsaturation at C-7 in the B ring of sterols and thus converts fecosterol to episterol. The sterol-C5-desaturase erg3B then catalyzes the introduction of a C-5 double bond in the B ring to produce 5-dehydroepisterol. The 2 other sterol-C5-desaturases, erg3A and erg3C, seem to be less important in ergosterol biosynthesis. The C-22 sterol desaturase erg5 further converts 5-dehydroepisterol into ergosta-5,7,22,24(28)-tetraen-3beta-ol by forming the C-22(23) double bond in the sterol side chain. Finally, ergosta-5,7,22,24(28)-tetraen-3beta-ol is substrate of the C-24(28) sterol reductases erg4A and erg4B to produce ergosterol. Possible alternative sterol biosynthetic pathways might exist from fecosterol to ergosterol, depending on the activities of the erg3 isoforms. The chain is Squalene epoxidase erg1 from Aspergillus fumigatus (strain ATCC MYA-4609 / CBS 101355 / FGSC A1100 / Af293) (Neosartorya fumigata).